The primary structure comprises 584 residues: Protein phosphatase 2A scaffold subunit (584 aa).

HEAT repeat units lie at residues 7 to 45, 46 to 84, 86 to 123, 168 to 206, 207 to 239, 240 to 278, 279 to 317, 318 to 356, 358 to 395, 397 to 434, 441 to 479, 480 to 512, 513 to 551, and 553 to 584; these read ESDD…ALGP, ERTR…FVGG, EHAV…EIPT, LRKT…VKSE, ILPL…MLTN, EENI…SMGT, EITK…LLTK, EMNI…IYGK, DTLT…VIGI, MLSQ…QLGV, LGNL…AKNN, IIPK…VVGG, DVIS…LLDS, and IVQS…LQLC.

The protein belongs to the phosphatase 2A regulatory subunit A family. In terms of assembly, component of the Sca1 complex composed of at least gefA, gefH, scaA, phr, and the protein phosphatase 2A subunits pppA and pho2B.

It is found in the cytoplasm. Its subcellular location is the cytosol. The protein localises to the cell membrane. Scaffolding molecule which may coordinate the assembly of the catalytic subunit and a variable regulatory B subunit. Component of the Sca1 complex, a regulator of cell motility, chemotaxis and signal relay. The Sca1 complex is recruited to the plasma membrane in a chemoattractant- and F-actin-dependent manner and is enriched at the leading edge of chemotaxing cells where it regulates F-actin dynamics and signal relay by controlling the activation of rasC and the downstream target of rapamycin complex 2 (TORC2)-Akt/protein kinase B (PKB) pathway. This chain is Protein phosphatase 2A scaffold subunit (pppA), found in Dictyostelium discoideum (Social amoeba).